A 607-amino-acid chain; its full sequence is T-box transcription factor TBX18 (607 aa).

An Engrailed homology 1 repressor motif is present at residues 18–28; the sequence is HAFSVEALIGA. The disordered stretch occupies residues 30–141; that stretch reads KQQQLQKKRR…PLPSPQAPRV (112 aa). Positions 36-40 match the Nuclear localization signal motif; the sequence is KKRRK. Positions 44 to 53 are enriched in low complexity; it reads EEAAGAVDDG. Positions 143–330 form a DNA-binding region, T-box; that stretch reads LQGAELWKRF…RNPFAKGFRD (188 aa).

In terms of assembly, homodimer. Can form a heterodimer with TBX15. Interacts with GATA4 and NKX2-5. Interacts with PAX3. Interacts (via engrailed homology 1 repressor motif) with TLE3; this interaction represses TBX18 transcriptional activity. Interacts with SIX1.

It is found in the nucleus. In terms of biological role, acts as a transcriptional repressor involved in developmental processes of a variety of tissues and organs, including the heart and coronary vessels, the ureter and the vertebral column. Required for embryonic development of the sino atrial node (SAN) head area. This is T-box transcription factor TBX18 (TBX18) from Homo sapiens (Human).